Consider the following 390-residue polypeptide: Transforming growth factor beta-1 proprotein (390 aa).

The N-terminal stretch at 1–29 (MPPSGLRLLPLLLPLLWLLVLTPGRPAAG) is a signal peptide. A straightjacket domain region spans residues 30-74 (LSTCKTIDMELVKRKRIEAIRGQILSKLRLASPPSQGEVPPGPLP). The tract at residues 75 to 271 (EAVLALYNST…ATPLERAQQL (197 aa)) is arm domain. 3 N-linked (GlcNAc...) asparagine glycosylation sites follow: asparagine 82, asparagine 136, and asparagine 176. Positions 226 to 252 (DSKDNTLRVGINGFSSSRRGDLATIDG) are bowtie tail. The Cell attachment site signature appears at 244-246 (RGD). 4 cysteine pairs are disulfide-bonded: cysteine 285–cysteine 294, cysteine 293–cysteine 356, cysteine 322–cysteine 387, and cysteine 326–cysteine 389.

This sequence belongs to the TGF-beta family. Homodimer; disulfide-linked. Interacts with the serine proteases, HTRA1 and HTRA3: the interaction with either inhibits TGFB1-mediated signaling and the HTRA protease activity is required for this inhibition. May interact with THSD4; this interaction may lead to sequestration by FBN1 microfibril assembly and attenuation of TGFB signaling. Interacts with CD109, DPT and ASPN. Interacts with EFEMP2. Interacts with TSKU; the interaction contributes to regulation of the hair cycle. Interacts with TGFBR3. In terms of assembly, homodimer; disulfide-linked. Interacts with transforming growth factor beta-1 (TGF-beta-1) chain; interaction is non-covalent and maintains TGF-beta-1 in a latent state; each latency-associated peptide (LAP) monomer interacts with TGF-beta-1 in the other monomer. Interacts with LTBP1; leading to regulation of TGF-beta-1 activation. Interacts with LRRC32/GARP; leading to regulation of TGF-beta-1 activation on the surface of activated regulatory T-cells (Tregs). Interacts with LRRC33/NRROS; leading to regulation of TGF-beta-1 activation in macrophages and microglia. Interacts (via cell attachment site) with integrins ITGAV and ITGB6 (ITGAV:ITGB6), leading to release of the active TGF-beta-1. Latency-associated peptide: Interacts with NREP; the interaction results in a decrease in TGFB1 autoinduction. Interacts with HSP90AB1; inhibits latent TGFB1 activation. As to quaternary structure, homodimer; disulfide-linked. Interacts with TGF-beta receptors (TGFBR1 and TGFBR2), leading to signal transduction. Transforming growth factor beta-1 proprotein: The precursor proprotein is cleaved in the Golgi apparatus by FURIN to form Transforming growth factor beta-1 (TGF-beta-1) and Latency-associated peptide (LAP) chains, which remain non-covalently linked, rendering TGF-beta-1 inactive. In terms of processing, N-glycosylated. Deglycosylation leads to activation of Transforming growth factor beta-1 (TGF-beta-1); mechanisms triggering deglycosylation-driven activation of TGF-beta-1 are however unclear.

The protein localises to the secreted. It localises to the extracellular space. Its subcellular location is the extracellular matrix. In terms of biological role, transforming growth factor beta-1 proprotein: Precursor of the Latency-associated peptide (LAP) and Transforming growth factor beta-1 (TGF-beta-1) chains, which constitute the regulatory and active subunit of TGF-beta-1, respectively. Functionally, required to maintain the Transforming growth factor beta-1 (TGF-beta-1) chain in a latent state during storage in extracellular matrix. Associates non-covalently with TGF-beta-1 and regulates its activation via interaction with 'milieu molecules', such as LTBP1, LRRC32/GARP and LRRC33/NRROS, that control activation of TGF-beta-1. Interaction with LRRC33/NRROS regulates activation of TGF-beta-1 in macrophages and microglia. Interaction with LRRC32/GARP controls activation of TGF-beta-1 on the surface of activated regulatory T-cells (Tregs). Interaction with integrins (ITGAV:ITGB6 or ITGAV:ITGB8) results in distortion of the Latency-associated peptide chain and subsequent release of the active TGF-beta-1. Multifunctional protein that regulates the growth and differentiation of various cell types and is involved in various processes, such as normal development, immune function, microglia function and responses to neurodegeneration. Activation into mature form follows different steps: following cleavage of the proprotein in the Golgi apparatus, Latency-associated peptide (LAP) and Transforming growth factor beta-1 (TGF-beta-1) chains remain non-covalently linked rendering TGF-beta-1 inactive during storage in extracellular matrix. At the same time, LAP chain interacts with 'milieu molecules', such as LTBP1, LRRC32/GARP and LRRC33/NRROS that control activation of TGF-beta-1 and maintain it in a latent state during storage in extracellular milieus. TGF-beta-1 is released from LAP by integrins (ITGAV:ITGB6 or ITGAV:ITGB8): integrin-binding to LAP stabilizes an alternative conformation of the LAP bowtie tail and results in distortion of the LAP chain and subsequent release of the active TGF-beta-1. Once activated following release of LAP, TGF-beta-1 acts by binding to TGF-beta receptors (TGFBR1 and TGFBR2), which transduce signal. While expressed by many cells types, TGF-beta-1 only has a very localized range of action within cell environment thanks to fine regulation of its activation by Latency-associated peptide chain (LAP) and 'milieu molecules'. Plays an important role in bone remodeling: acts as a potent stimulator of osteoblastic bone formation, causing chemotaxis, proliferation and differentiation in committed osteoblasts. Can promote either T-helper 17 cells (Th17) or regulatory T-cells (Treg) lineage differentiation in a concentration-dependent manner. At high concentrations, leads to FOXP3-mediated suppression of RORC and down-regulation of IL-17 expression, favoring Treg cell development. At low concentrations in concert with IL-6 and IL-21, leads to expression of the IL-17 and IL-23 receptors, favoring differentiation to Th17 cells. Stimulates sustained production of collagen through the activation of CREB3L1 by regulated intramembrane proteolysis (RIP). Mediates SMAD2/3 activation by inducing its phosphorylation and subsequent translocation to the nucleus. Positively regulates odontoblastic differentiation in dental papilla cells, via promotion of IPO7-mediated translocation of phosphorylated SMAD2 to the nucleus and subsequent transcription of target genes. Can induce epithelial-to-mesenchymal transition (EMT) and cell migration in various cell types. The protein is Transforming growth factor beta-1 proprotein (TGFB1) of Equus caballus (Horse).